A 290-amino-acid chain; its full sequence is uncharacterized protein (290 aa).

Residues 1–61 (MVMNMNHLHI…RDKHHGLMLT (61 aa)) enclose the HTH lysR-type domain. Positions 20-39 (ITEAAKELFISQPAVSKAIK) form a DNA-binding region, H-T-H motif.

It belongs to the LysR transcriptional regulatory family.

This is an uncharacterized protein from Bacillus subtilis (strain 168).